The chain runs to 173 residues: Ribonuclease H (173 aa).

Positions 1-20 are disordered; the sequence is MKATSKAKTHPPGATAAKDP. An RNase H type-1 domain is found at 20–162; sequence PQKQVIIYTD…CDVLSKEAAG (143 aa). Mg(2+) is bound by residues aspartate 29, glutamate 67, aspartate 89, and aspartate 154.

Belongs to the RNase H family. As to quaternary structure, monomer. The cofactor is Mg(2+).

It is found in the cytoplasm. The enzyme catalyses Endonucleolytic cleavage to 5'-phosphomonoester.. Its function is as follows. Endonuclease that specifically degrades the RNA of RNA-DNA hybrids. The protein is Ribonuclease H of Syntrophus aciditrophicus (strain SB).